Consider the following 304-residue polypeptide: Glycosyltransferase AglE (304 aa).

This sequence belongs to the glycosyltransferase 2 family.

It is found in the cell membrane. It functions in the pathway cell surface structure biogenesis; S-layer biogenesis. Its function is as follows. Involved in the assembly of a N-linked pentasaccharide that decorates the S-layer glycoprotein and flagellins. Catalyzes the addition to the dolichol phosphate carrier of the hexuronic acid found at position 4 of the pentasaccharide. The chain is Glycosyltransferase AglE (aglE) from Haloferax volcanii (strain ATCC 29605 / DSM 3757 / JCM 8879 / NBRC 14742 / NCIMB 2012 / VKM B-1768 / DS2) (Halobacterium volcanii).